The chain runs to 320 residues: MSKSESPKEPEQLRKLFIGGLSFETTDESLRSHFEQWGTLTDCVVMRDPNTKRSRGFGFVTYATVEEVDAAMNARPHKVDGRVVEPKRAVSREDSQRPGAHLTVKKIFVGGIKEDTEEHHLRDYFEQYGKIEVIEIMTDRGSGKKRGFAFVTFDDHDSVDKIVIQKYHTVNGHNCEVRKALCKQEMASASSSQRGRSGSGNFGGGRGGGFGGNDNFGRGGNFSGRGGFGGSRGGGGYGGSGDGYNGFGNDGSNFGGGGSYNDFGNYNNQSSNFGPMKGGNFGGRSSGPYGGGGQYFAKPRNQGGYGGSSSSSSYGSGRRF.

Methionine 1 bears the N-acetylmethionine mark. Position 2 is an N-acetylserine; in Heterogeneous nuclear ribonucleoprotein A1, N-terminally processed (serine 2). Serine 2 bears the Phosphoserine mark. At lysine 3 the chain carries N6-acetyllysine; alternate. Residue lysine 3 forms a Glycyl lysine isopeptide (Lys-Gly) (interchain with G-Cter in SUMO2); alternate linkage. Phosphoserine is present on residues serine 4 and serine 6. A globular A domain region spans residues serine 4–aspartate 94. Lysine 8 participates in a covalent cross-link: Glycyl lysine isopeptide (Lys-Gly) (interchain with G-Cter in SUMO2). 2 RRM domains span residues arginine 14–arginine 97 and lysine 105–glutamine 184. A Phosphoserine modification is found at serine 22. Lysine 78 is covalently cross-linked (Glycyl lysine isopeptide (Lys-Gly) (interchain with G-Cter in SUMO2)). A globular B domain region spans residues serine 95–glutamate 185. Lysine 113 is covalently cross-linked (Glycyl lysine isopeptide (Lys-Gly) (interchain with G-Cter in SUMO)). Residues lysine 179 and lysine 183 each participate in a glycyl lysine isopeptide (Lys-Gly) (interchain with G-Cter in SUMO2) cross-link. Residues serine 188–phenylalanine 216 are disordered. The residue at position 192 (serine 192) is a Phosphoserine; by MKNK2. An Asymmetric dimethylarginine; alternate modification is found at arginine 194. Residue arginine 194 is modified to Dimethylated arginine; alternate. The residue at position 194 (arginine 194) is an Omega-N-methylarginine; alternate. The span at serine 197–phenylalanine 216 shows a compositional bias: gly residues. Residue serine 199 is modified to Phosphoserine. Arginine 206, arginine 218, arginine 225, and arginine 232 each carry asymmetric dimethylarginine; alternate. Dimethylated arginine; alternate is present on arginine 206. Omega-N-methylarginine; alternate occurs at positions 206, 218, 225, and 232. The segment at arginine 218–serine 240 is RNA-binding RGG-box. Arginine 225 bears the Dimethylated arginine; alternate mark. Positions asparagine 268–tyrosine 305 are nuclear targeting sequence. Residues serine 271–phenylalanine 320 form a disordered region. Over residues methionine 276 to glutamine 294 the composition is skewed to gly residues. Omega-N-methylarginine is present on arginine 284. At serine 285 the chain carries Phosphoserine. Lysine 298 is modified (N6-acetyllysine; alternate). Lysine 298 is covalently cross-linked (Glycyl lysine isopeptide (Lys-Gly) (interchain with G-Cter in SUMO2); alternate). Arginine 300 carries the post-translational modification Omega-N-methylarginine. The segment covering serine 308–phenylalanine 320 has biased composition (low complexity). Serine 309 carries the phosphoserine modification. Phosphoserine; by MKNK2 is present on residues serine 310, serine 311, and serine 312. Residues serine 313 and serine 316 each carry the phosphoserine modification. An Omega-N-methylarginine modification is found at arginine 318.

Identified in the spliceosome C complex. Identified in a IGF2BP1-dependent mRNP granule complex containing untranslated mRNAs. Interacts with SEPT6. Interacts with C9orf72. Interacts with KHDRBS1. Interacts with UBQLN2. Interacts with PPIA/CYPA. Post-translationally, sumoylated.

The protein resides in the nucleus. The protein localises to the cytoplasm. Its function is as follows. Involved in the packaging of pre-mRNA into hnRNP particles, transport of poly(A) mRNA from the nucleus to the cytoplasm and modulation of splice site selection. Plays a role in the splicing of pyruvate kinase PKM by binding repressively to sequences flanking PKM exon 9, inhibiting exon 9 inclusion and resulting in exon 10 inclusion and production of the PKM M2 isoform. Binds to the IRES and thereby inhibits the translation of the apoptosis protease activating factor APAF1. May bind to specific miRNA hairpins. The polypeptide is Heterogeneous nuclear ribonucleoprotein A1 (Hnrnpa1) (Rattus norvegicus (Rat)).